Consider the following 477-residue polypeptide: Cysteine--tRNA ligase (477 aa).

C29 contacts Zn(2+). The short motif at 31 to 41 is the 'HIGH' region element; sequence PTVYDFAHIGN. The Zn(2+) site is built by C224, H249, and E253. The 'KMSKS' region motif lies at 282 to 286; the sequence is KMSKS. Residue K285 participates in ATP binding.

This sequence belongs to the class-I aminoacyl-tRNA synthetase family. As to quaternary structure, monomer. Requires Zn(2+) as cofactor.

Its subcellular location is the cytoplasm. It catalyses the reaction tRNA(Cys) + L-cysteine + ATP = L-cysteinyl-tRNA(Cys) + AMP + diphosphate. The protein is Cysteine--tRNA ligase of Nitrobacter winogradskyi (strain ATCC 25391 / DSM 10237 / CIP 104748 / NCIMB 11846 / Nb-255).